The sequence spans 389 residues: Mitochondrial tRNA-specific 2-thiouridylase 1 (389 aa).

Residues 8–15 and M34 each bind ATP; that span reads GVSGGVDS. The interval 94-96 is interaction with target base in tRNA; it reads NPD. The active-site Nucleophile is the C99. A disulfide bond links C99 and C205. G124 serves as a coordination point for ATP. An interaction with tRNA region spans residues 154–156; the sequence is KDQ. C205 serves as the catalytic Cysteine persulfide intermediate. The interval 317–318 is interaction with tRNA; it reads QH.

This sequence belongs to the MnmA/TRMU family.

The protein localises to the mitochondrion. It catalyses the reaction 5-taurinomethyluridine(34) in tRNA + S-sulfanyl-L-cysteinyl-[protein] + AH2 + ATP = 5-taurinomethyl-2-thiouridine(34) in tRNA + L-cysteinyl-[protein] + A + AMP + diphosphate + H(+). In terms of biological role, catalyzes the 2-thiolation of uridine at the wobble position (U34) of mitochondrial tRNA(Lys), tRNA(Glu) and tRNA(Gln). Required for the formation of 5-taurinomethyl-2-thiouridine (tm5s2U) of mitochondrial tRNA(Lys), tRNA(Glu), and tRNA(Gln) at the wobble position. ATP is required to activate the C2 atom of the wobble base. The chain is Mitochondrial tRNA-specific 2-thiouridylase 1 from Drosophila melanogaster (Fruit fly).